The primary structure comprises 202 residues: Inner membrane-spanning protein YciB (202 aa).

The next 5 helical transmembrane spans lie at 47–67, 75–95, 101–121, 146–166, and 174–194; these read ILLA…WVHF, MLWV…AFQN, WKPT…AFIL, LSWI…AFNF, and FKLF…GMLL.

The protein belongs to the YciB family.

The protein localises to the cell inner membrane. In terms of biological role, plays a role in cell envelope biogenesis, maintenance of cell envelope integrity and membrane homeostasis. In Dechloromonas aromatica (strain RCB), this protein is Inner membrane-spanning protein YciB.